Here is a 94-residue protein sequence, read N- to C-terminus: Small ribosomal subunit protein uS19c (94 aa).

Belongs to the universal ribosomal protein uS19 family.

The protein resides in the plastid. It is found in the chloroplast. Its function is as follows. Protein S19 forms a complex with S13 that binds strongly to the 16S ribosomal RNA. The protein is Small ribosomal subunit protein uS19c (rps19) of Euglena gracilis.